The sequence spans 120 residues: uncharacterized protein (120 aa).

2 helical membrane passes run 8-28 (PFVT…CTLV) and 55-75 (FLEN…IGIL).

The protein resides in the membrane. This is an uncharacterized protein from Saccharomyces cerevisiae (strain ATCC 204508 / S288c) (Baker's yeast).